We begin with the raw amino-acid sequence, 59 residues long: Salivary thrombin inhibitor XC-43 (59 aa).

Residues 1–23 (MNLQFLFIFIAFCVMLFAQIVTA) form the signal peptide.

Interacts with human F2 (thrombin). As to expression, salivary gland (at protein level).

It is found in the secreted. Functionally, anticoagulant protein that acts as a competitive inhibitor of host thrombin. Inhibits thrombin-mediated host platelet aggregation. The protein is Salivary thrombin inhibitor XC-43 of Xenopsylla cheopis (Oriental rat flea).